The following is a 125-amino-acid chain: Small ribosomal subunit protein uS13 (125 aa).

The segment at 93-125 is disordered; the sequence is RRGLPVRGQRTKTNARTRKGPKRTVAGKKKAGR.

The protein belongs to the universal ribosomal protein uS13 family. Part of the 30S ribosomal subunit. Forms a loose heterodimer with protein S19. Forms two bridges to the 50S subunit in the 70S ribosome.

Located at the top of the head of the 30S subunit, it contacts several helices of the 16S rRNA. In the 70S ribosome it contacts the 23S rRNA (bridge B1a) and protein L5 of the 50S subunit (bridge B1b), connecting the 2 subunits; these bridges are implicated in subunit movement. Contacts the tRNAs in the A and P-sites. The chain is Small ribosomal subunit protein uS13 from Renibacterium salmoninarum (strain ATCC 33209 / DSM 20767 / JCM 11484 / NBRC 15589 / NCIMB 2235).